A 367-amino-acid chain; its full sequence is Innexin inx2 (367 aa).

The Cytoplasmic segment spans residues 1–22 (MFDVFGSVKGLLKIDQVCIDNN). The chain crosses the membrane as a helical span at residues 23–43 (VFRMHYKATVIILIAFSLLVT). At 44–109 (SRQYIGDPID…EDEVKYHKYY (66 aa)) the chain is on the extracellular side. The chain crosses the membrane as a helical span at residues 110–130 (QWVCFVLFFQAILFYVPRYLW). Residues 130–179 (WKSWEGGRLKMLVMDLNSPIVNDECKNDRKKILVDYFIGNLNRHNFYAFR) are interaction with shg. At 131–179 (KSWEGGRLKMLVMDLNSPIVNDECKNDRKKILVDYFIGNLNRHNFYAFR) the chain is on the cytoplasmic side. Residues 180-200 (FFVCEALNFVNVIGQIYFVDF) traverse the membrane as a helical segment. Residues 201–266 (FLDGEFSTYG…VLPLNIVNEK (66 aa)) are Extracellular-facing. Residues 267–287 (IYVFLWFWFIILSIMSGISLI) traverse the membrane as a helical segment. Residues 288–367 (YRIAVVAGPK…HSAHKRPFDA (80 aa)) are Cytoplasmic-facing.

The protein belongs to the pannexin family. Monomer and heterooligomer with ogre or Inx3 (via cytoplasmic C-terminal region). Interacts (via cytoplasmic loop) with shg (via cytoplasmic region). Interacts with arm. In ovary, expressed in inner germarial sheath cells, prefollicular cells, follicle cells, nurse cells and oocytes. Expressed in embryonic epithelial cells. Expressed in foregut and hindgut from stage 11-17, segmentally repeated tracheal placodes at stage 14, salivary gland at stage 16 and proventriculus at stage 16-17 (at protein level). During germband extension stage (stage 7), expressed in epidermal epithelial cells. Expressed in cephalic furrow. Repeating epidermal pattern emerges at stage 11, refines to one or two cells at each side of the segment borders by stage 13. Expressed in the imaginal wing disk. In pupae, expressed in the CNS and in primary, secondary and tertiary pigment cells of the retina. Expressed in optic lamina of the adult CNS.

The protein localises to the cell membrane. Its subcellular location is the cell junction. The protein resides in the gap junction. It localises to the cytoplasm. It is found in the apical cell membrane. The protein localises to the apicolateral cell membrane. Its subcellular location is the basolateral cell membrane. The protein resides in the lateral cell membrane. Its function is as follows. Structural components of the gap junctions. Involved in gap junctional communication between germline and somatic cells which is essential for normal oogenesis. In embryonic epidermis, required for epithelial morphogenesis. Required for keyhole formation during early stages of proventriculus development in response to wg signaling. In follicle cells, promotes the formation of egg chambers in part through regulation of shg and baz at the boundary between germ cells and follicle cells. In inner germarial sheath cells, required for survival of early germ cells and for cyst formation. The polypeptide is Innexin inx2 (Inx2) (Drosophila melanogaster (Fruit fly)).